Reading from the N-terminus, the 451-residue chain is 3-phosphoshikimate 1-carboxyvinyltransferase (451 aa).

Residues K30, S31, and R35 each coordinate 3-phosphoshikimate. Position 30 (K30) interacts with phosphoenolpyruvate. Residues G103 and R131 each contribute to the phosphoenolpyruvate site. 3-phosphoshikimate is bound by residues S176, Q178, D329, and K356. Q178 provides a ligand contact to phosphoenolpyruvate. D329 acts as the Proton acceptor in catalysis. 2 residues coordinate phosphoenolpyruvate: R360 and R404.

This sequence belongs to the EPSP synthase family. Monomer.

It is found in the cytoplasm. It catalyses the reaction 3-phosphoshikimate + phosphoenolpyruvate = 5-O-(1-carboxyvinyl)-3-phosphoshikimate + phosphate. Its pathway is metabolic intermediate biosynthesis; chorismate biosynthesis; chorismate from D-erythrose 4-phosphate and phosphoenolpyruvate: step 6/7. Functionally, catalyzes the transfer of the enolpyruvyl moiety of phosphoenolpyruvate (PEP) to the 5-hydroxyl of shikimate-3-phosphate (S3P) to produce enolpyruvyl shikimate-3-phosphate and inorganic phosphate. This chain is 3-phosphoshikimate 1-carboxyvinyltransferase, found in Parvibaculum lavamentivorans (strain DS-1 / DSM 13023 / NCIMB 13966).